A 387-amino-acid polypeptide reads, in one-letter code: ATP phosphoribosyltransferase regulatory subunit (387 aa).

Belongs to the class-II aminoacyl-tRNA synthetase family. HisZ subfamily. Heteromultimer composed of HisG and HisZ subunits.

It is found in the cytoplasm. It participates in amino-acid biosynthesis; L-histidine biosynthesis; L-histidine from 5-phospho-alpha-D-ribose 1-diphosphate: step 1/9. Functionally, required for the first step of histidine biosynthesis. May allow the feedback regulation of ATP phosphoribosyltransferase activity by histidine. The protein is ATP phosphoribosyltransferase regulatory subunit of Polynucleobacter asymbioticus (strain DSM 18221 / CIP 109841 / QLW-P1DMWA-1) (Polynucleobacter necessarius subsp. asymbioticus).